A 121-amino-acid chain; its full sequence is ATP synthase epsilon chain (121 aa).

This sequence belongs to the ATPase epsilon chain family. F-type ATPases have 2 components, CF(1) - the catalytic core - and CF(0) - the membrane proton channel. CF(1) has five subunits: alpha(3), beta(3), gamma(1), delta(1), epsilon(1). CF(0) has three main subunits: a, b and c.

Its subcellular location is the cell membrane. Functionally, produces ATP from ADP in the presence of a proton gradient across the membrane. In Mycobacterium avium (strain 104), this protein is ATP synthase epsilon chain.